The sequence spans 44 residues: Somatoliberin (44 aa).

Leu-44 is subject to Leucine amide.

This sequence belongs to the glucagon family.

Its subcellular location is the secreted. GRF is released by the hypothalamus and acts on the adenohypophyse to stimulate the secretion of growth hormone. The polypeptide is Somatoliberin (GHRH) (Sus scrofa (Pig)).